The sequence spans 1843 residues: Protein TIC 214 (1843 aa).

6 consecutive transmembrane segments (helical) span residues 18–38, 64–84, 87–107, 124–144, 172–192, and 217–237; these read IINSVVVVGLYYGFLTTFSIG, FITGQLMMFISIYYAPLHLAL, PHTITVLVLPYLLFHFFWNNH, LSIQCVFLNNLIFQLFNHFIL, VGWLIGHILFMKWVGLVLFWI, and IFSILLFITCVYYLGRIPSPI. Disordered stretches follow at residues 244–281, 557–576, 582–647, 724–744, and 1527–1586; these read ETSKTEEREESEEETDVEIETTSETKGTKQEQEGAAEK, EEIENDEESKPDHGIRSRKA, FTDN…DEVA, NSEEEDTKEKEKKREEKRQEN, and SLEL…KKKK. A compositionally biased stretch (acidic residues) spans 251-264; the sequence is REESEEETDVEIET. Residues 269–281 show a composition bias toward basic and acidic residues; that stretch reads KGTKQEQEGAAEK. Residues 590–639 are compositionally biased toward low complexity; that stretch reads NTPTSTTETTSTAETTSTTETTSTTKNTSTTKNTSTTETTSTTENENTSN. Composition is skewed to basic and acidic residues over residues 730–744 and 1527–1540; these read TKEKEKKREEKRQEN and SLELKNKEEKKKPA. Positions 1543–1562 are enriched in polar residues; the sequence is NIGSDTQKQGNPGSDPSTQQ. Positions 1563–1580 are enriched in basic and acidic residues; sequence KDIKKNVKEDYDGRSDIQ.

It belongs to the TIC214 family. As to quaternary structure, part of the Tic complex.

The protein resides in the plastid. It is found in the chloroplast inner membrane. In terms of biological role, involved in protein precursor import into chloroplasts. May be part of an intermediate translocation complex acting as a protein-conducting channel at the inner envelope. In Nandina domestica (Heavenly bamboo), this protein is Protein TIC 214.